We begin with the raw amino-acid sequence, 396 residues long: 1-deoxy-D-xylulose 5-phosphate reductoisomerase (396 aa).

Residues Thr-17, Gly-18, Ser-19, Ile-20, Asn-47, and Asn-130 each contribute to the NADPH site. Lys-131 is a 1-deoxy-D-xylulose 5-phosphate binding site. Glu-132 is a binding site for NADPH. Mn(2+) is bound at residue Asp-156. 4 residues coordinate 1-deoxy-D-xylulose 5-phosphate: Ser-157, Glu-158, Ser-182, and His-205. Mn(2+) is bound at residue Glu-158. Gly-211 contributes to the NADPH binding site. Residues Ser-218, Asn-223, Lys-224, and Glu-227 each contribute to the 1-deoxy-D-xylulose 5-phosphate site. Mn(2+) is bound at residue Glu-227.

This sequence belongs to the DXR family. The cofactor is Mg(2+). Mn(2+) serves as cofactor.

The catalysed reaction is 2-C-methyl-D-erythritol 4-phosphate + NADP(+) = 1-deoxy-D-xylulose 5-phosphate + NADPH + H(+). It functions in the pathway isoprenoid biosynthesis; isopentenyl diphosphate biosynthesis via DXP pathway; isopentenyl diphosphate from 1-deoxy-D-xylulose 5-phosphate: step 1/6. Functionally, catalyzes the NADPH-dependent rearrangement and reduction of 1-deoxy-D-xylulose-5-phosphate (DXP) to 2-C-methyl-D-erythritol 4-phosphate (MEP). In Rhizobium etli (strain ATCC 51251 / DSM 11541 / JCM 21823 / NBRC 15573 / CFN 42), this protein is 1-deoxy-D-xylulose 5-phosphate reductoisomerase.